Reading from the N-terminus, the 389-residue chain is Succinate--CoA ligase [ADP-forming] subunit beta (389 aa).

ATP is bound by residues Lys46, 53–55 (GRG), Glu99, Cys102, and Glu107. Mg(2+)-binding residues include Asn199 and Asp213. Residues Asn264 and 321-323 (GIV) each bind substrate.

It belongs to the succinate/malate CoA ligase beta subunit family. Heterotetramer of two alpha and two beta subunits. The cofactor is Mg(2+).

The enzyme catalyses succinate + ATP + CoA = succinyl-CoA + ADP + phosphate. It catalyses the reaction GTP + succinate + CoA = succinyl-CoA + GDP + phosphate. The protein operates within carbohydrate metabolism; tricarboxylic acid cycle; succinate from succinyl-CoA (ligase route): step 1/1. Its function is as follows. Succinyl-CoA synthetase functions in the citric acid cycle (TCA), coupling the hydrolysis of succinyl-CoA to the synthesis of either ATP or GTP and thus represents the only step of substrate-level phosphorylation in the TCA. The beta subunit provides nucleotide specificity of the enzyme and binds the substrate succinate, while the binding sites for coenzyme A and phosphate are found in the alpha subunit. This chain is Succinate--CoA ligase [ADP-forming] subunit beta, found in Haemophilus influenzae (strain 86-028NP).